Reading from the N-terminus, the 345-residue chain is Anthranilate phosphoribosyltransferase (345 aa).

5-phospho-alpha-D-ribose 1-diphosphate-binding positions include Gly84, 87–88 (GD), Thr92, 94–97 (NIST), 112–120 (KHGGRGVSS), and Ser124. Residue Gly84 coordinates anthranilate. Ser96 is a Mg(2+) binding site. Arg170 serves as a coordination point for anthranilate. Mg(2+) contacts are provided by Asp229 and Glu230.

The protein belongs to the anthranilate phosphoribosyltransferase family. As to quaternary structure, homodimer. It depends on Mg(2+) as a cofactor.

It catalyses the reaction N-(5-phospho-beta-D-ribosyl)anthranilate + diphosphate = 5-phospho-alpha-D-ribose 1-diphosphate + anthranilate. It participates in amino-acid biosynthesis; L-tryptophan biosynthesis; L-tryptophan from chorismate: step 2/5. Its function is as follows. Catalyzes the transfer of the phosphoribosyl group of 5-phosphorylribose-1-pyrophosphate (PRPP) to anthranilate to yield N-(5'-phosphoribosyl)-anthranilate (PRA). The protein is Anthranilate phosphoribosyltransferase of Paracidovorax citrulli (strain AAC00-1) (Acidovorax citrulli).